A 182-amino-acid chain; its full sequence is Trypsin inhibitor 2 (182 aa).

The residue at position 1 (Gln1) is a Pyrrolidone carboxylic acid. Intrachain disulfides connect Cys40-Cys84 and Cys136-Cys147.

The protein belongs to the protease inhibitor I3 (leguminous Kunitz-type inhibitor) family.

In Psophocarpus tetragonolobus (Winged bean), this protein is Trypsin inhibitor 2.